A 92-amino-acid chain; its full sequence is Transcription factor PRE5 (92 aa).

The region spanning 4-59 is the bHLH domain; sequence RRSRQTSNASRISDDQMIDLVSKLRQFLPEIHERRRSDKVSASKVLQETCNYIRKL.

The protein belongs to the bHLH protein family. In terms of assembly, interacts with IBH1.

It localises to the nucleus. Functionally, atypical and probable non DNA-binding bHLH transcription factor that integrates multiple signaling pathways to regulate cell elongation and plant development. May have a regulatory role in various aspects of gibberellin-dependent growth and development. The sequence is that of Transcription factor PRE5 (PRE5) from Arabidopsis thaliana (Mouse-ear cress).